The following is a 197-amino-acid chain: uncharacterized protein (197 aa).

The SIS domain maps to 33–184 (MISKIMDASS…IAEFMSILGK (152 aa)).

Belongs to the SIS family. PHI subfamily.

This is an uncharacterized protein from Methanothermobacter thermautotrophicus (strain ATCC 29096 / DSM 1053 / JCM 10044 / NBRC 100330 / Delta H) (Methanobacterium thermoautotrophicum).